A 251-amino-acid polypeptide reads, in one-letter code: Hydroxyacylglutathione hydrolase (251 aa).

The Zn(2+) site is built by H53, H55, D57, H58, H110, D127, and H165.

This sequence belongs to the metallo-beta-lactamase superfamily. Glyoxalase II family. Monomer. Requires Zn(2+) as cofactor.

It carries out the reaction an S-(2-hydroxyacyl)glutathione + H2O = a 2-hydroxy carboxylate + glutathione + H(+). The protein operates within secondary metabolite metabolism; methylglyoxal degradation; (R)-lactate from methylglyoxal: step 2/2. Functionally, thiolesterase that catalyzes the hydrolysis of S-D-lactoyl-glutathione to form glutathione and D-lactic acid. This chain is Hydroxyacylglutathione hydrolase, found in Salmonella dublin (strain CT_02021853).